Reading from the N-terminus, the 929-residue chain is Bifunctional uridylyltransferase/uridylyl-removing enzyme (929 aa).

The tract at residues 1-383 (MDSVTTEHKQ…RPTPAKRRVP (383 aa)) is uridylyltransferase. The tract at residues 384–739 (DSDDFIVDNN…VGFDEVRGVT (356 aa)) is uridylyl-removing. One can recognise an HD domain in the interval 499 to 622 (VDEHLIRCVG…VQSVEQMKLL (124 aa)). 2 consecutive ACT domains span residues 740–822 (ELTI…VVAR) and 850–927 (VIEV…AVQP).

It belongs to the GlnD family. Mg(2+) is required as a cofactor.

The catalysed reaction is [protein-PII]-L-tyrosine + UTP = [protein-PII]-uridylyl-L-tyrosine + diphosphate. It catalyses the reaction [protein-PII]-uridylyl-L-tyrosine + H2O = [protein-PII]-L-tyrosine + UMP + H(+). With respect to regulation, uridylyltransferase (UTase) activity is inhibited by glutamine, while glutamine activates uridylyl-removing (UR) activity. Modifies, by uridylylation and deuridylylation, the PII regulatory proteins (GlnB and homologs), in response to the nitrogen status of the cell that GlnD senses through the glutamine level. Under low glutamine levels, catalyzes the conversion of the PII proteins and UTP to PII-UMP and PPi, while under higher glutamine levels, GlnD hydrolyzes PII-UMP to PII and UMP (deuridylylation). Thus, controls uridylylation state and activity of the PII proteins, and plays an important role in the regulation of nitrogen fixation and metabolism. This chain is Bifunctional uridylyltransferase/uridylyl-removing enzyme, found in Bradyrhizobium diazoefficiens (strain JCM 10833 / BCRC 13528 / IAM 13628 / NBRC 14792 / USDA 110).